A 356-amino-acid polypeptide reads, in one-letter code: Phosphotriesterase-related protein (356 aa).

Positions 23, 25, 175, 207, 236, and 304 each coordinate a divalent metal cation.

Belongs to the metallo-dependent hydrolases superfamily. Phosphotriesterase family. Requires a divalent metal cation as cofactor.

This chain is Phosphotriesterase-related protein, found in Aedes aegypti (Yellowfever mosquito).